The primary structure comprises 677 residues: UvrABC system protein B (677 aa).

Residues 27 to 414 (ANLGHGVRDQ…SQGVIAEQII (388 aa)) enclose the Helicase ATP-binding domain. 40–47 (GVTGSGKT) serves as a coordination point for ATP. A Beta-hairpin motif is present at residues 93–116 (YYDYYQPEAYVPASDTYIEKDSSI). In terms of domain architecture, Helicase C-terminal spans 432–594 (QVDDLLAECR…IEPRTIRKSL (163 aa)). A UVR domain is found at 638–673 (AKHIQKLEREMREAAKELEFERAATLRDRIRLLRER).

This sequence belongs to the UvrB family. Forms a heterotetramer with UvrA during the search for lesions. Interacts with UvrC in an incision complex.

The protein resides in the cytoplasm. Functionally, the UvrABC repair system catalyzes the recognition and processing of DNA lesions. A damage recognition complex composed of 2 UvrA and 2 UvrB subunits scans DNA for abnormalities. Upon binding of the UvrA(2)B(2) complex to a putative damaged site, the DNA wraps around one UvrB monomer. DNA wrap is dependent on ATP binding by UvrB and probably causes local melting of the DNA helix, facilitating insertion of UvrB beta-hairpin between the DNA strands. Then UvrB probes one DNA strand for the presence of a lesion. If a lesion is found the UvrA subunits dissociate and the UvrB-DNA preincision complex is formed. This complex is subsequently bound by UvrC and the second UvrB is released. If no lesion is found, the DNA wraps around the other UvrB subunit that will check the other stand for damage. The chain is UvrABC system protein B from Nitratidesulfovibrio vulgaris (strain ATCC 29579 / DSM 644 / CCUG 34227 / NCIMB 8303 / VKM B-1760 / Hildenborough) (Desulfovibrio vulgaris).